The following is a 701-amino-acid chain: Elongation factor G (701 aa).

The tr-type G domain occupies 11–287 (TKVRNIGIMA…AVIDYLPSPL (277 aa)). Residues 20-27 (AHIDAGKT), 84-88 (DTPGH), and 138-141 (NKMD) contribute to the GTP site.

Belongs to the TRAFAC class translation factor GTPase superfamily. Classic translation factor GTPase family. EF-G/EF-2 subfamily.

It localises to the cytoplasm. Functionally, catalyzes the GTP-dependent ribosomal translocation step during translation elongation. During this step, the ribosome changes from the pre-translocational (PRE) to the post-translocational (POST) state as the newly formed A-site-bound peptidyl-tRNA and P-site-bound deacylated tRNA move to the P and E sites, respectively. Catalyzes the coordinated movement of the two tRNA molecules, the mRNA and conformational changes in the ribosome. This is Elongation factor G from Mycobacterium ulcerans (strain Agy99).